We begin with the raw amino-acid sequence, 60 residues long: Potassium channel toxin alpha-KTx 3.6 (60 aa).

The N-terminal stretch at 1–22 (MKVFFAVLITLFICSMIIGIHG) is a signal peptide. 3 cysteine pairs are disulfide-bonded: Cys29-Cys49, Cys35-Cys54, and Cys39-Cys56. Residue Lys59 is modified to Lysine amide.

This sequence belongs to the short scorpion toxin superfamily. Potassium channel inhibitor family. Alpha-KTx 03 subfamily. In terms of tissue distribution, expressed by the venom gland.

It localises to the secreted. Its function is as follows. Blocks voltage-gated potassium channels. At 2 uM, blocks rat Kv1.1/KCNA1 and Kv1.3/KCNA3, has a strong effect on rat Kv1.2/KCNA2 and Kv1.6/KCNA6 as well as a moderate effect on Shaker IR. The protein is Potassium channel toxin alpha-KTx 3.6 of Olivierus martensii (Manchurian scorpion).